Here is a 735-residue protein sequence, read N- to C-terminus: Photosystem I P700 chlorophyll a apoprotein A2 (735 aa).

A run of 8 helical transmembrane segments spans residues 46 to 69, 135 to 158, 175 to 199, 274 to 292, 331 to 354, 370 to 396, 418 to 440, and 518 to 536; these read IFAS…FHVA, LYTG…LHLQ, LNHH…HVAI, IAHH…GHMY, IHFQ…QHMY, AALY…IFFI, AIIS…PYVH, and FLVH…LILV. C560 and C569 together coordinate [4Fe-4S] cluster. A run of 2 helical transmembrane segments spans residues 576–597 and 644–666; these read AFYL…YWHW and LSVW…MFLI. The chlorophyll a site is built by H655, M663, and Y671. W672 serves as a coordination point for phylloquinone. Residues 708-728 form a helical membrane-spanning segment; it reads LVGLAHFSVGYIFTYAAFLIA.

This sequence belongs to the PsaA/PsaB family. The PsaA/B heterodimer binds the P700 chlorophyll special pair and subsequent electron acceptors. PSI consists of a core antenna complex that captures photons, and an electron transfer chain that converts photonic excitation into a charge separation. The eukaryotic PSI reaction center is composed of at least 11 subunits. Requires P700 is a chlorophyll a/chlorophyll a' dimer, A0 is one or more chlorophyll a, A1 is one or both phylloquinones and FX is a shared 4Fe-4S iron-sulfur center. as cofactor.

It is found in the plastid. The protein resides in the chloroplast thylakoid membrane. The catalysed reaction is reduced [plastocyanin] + hnu + oxidized [2Fe-2S]-[ferredoxin] = oxidized [plastocyanin] + reduced [2Fe-2S]-[ferredoxin]. Its function is as follows. PsaA and PsaB bind P700, the primary electron donor of photosystem I (PSI), as well as the electron acceptors A0, A1 and FX. PSI is a plastocyanin-ferredoxin oxidoreductase, converting photonic excitation into a charge separation, which transfers an electron from the donor P700 chlorophyll pair to the spectroscopically characterized acceptors A0, A1, FX, FA and FB in turn. Oxidized P700 is reduced on the lumenal side of the thylakoid membrane by plastocyanin. The polypeptide is Photosystem I P700 chlorophyll a apoprotein A2 (Zea mays (Maize)).